The following is a 314-amino-acid chain: Lipoyl synthase (314 aa).

Positions 55, 60, 66, 81, 85, 88, and 292 each coordinate [4Fe-4S] cluster. A Radical SAM core domain is found at 67–281 (WEDREATFLI…SAYAEGLGFA (215 aa)).

The protein belongs to the radical SAM superfamily. Lipoyl synthase family. It depends on [4Fe-4S] cluster as a cofactor.

The protein localises to the cytoplasm. It carries out the reaction [[Fe-S] cluster scaffold protein carrying a second [4Fe-4S](2+) cluster] + N(6)-octanoyl-L-lysyl-[protein] + 2 oxidized [2Fe-2S]-[ferredoxin] + 2 S-adenosyl-L-methionine + 4 H(+) = [[Fe-S] cluster scaffold protein] + N(6)-[(R)-dihydrolipoyl]-L-lysyl-[protein] + 4 Fe(3+) + 2 hydrogen sulfide + 2 5'-deoxyadenosine + 2 L-methionine + 2 reduced [2Fe-2S]-[ferredoxin]. The protein operates within protein modification; protein lipoylation via endogenous pathway; protein N(6)-(lipoyl)lysine from octanoyl-[acyl-carrier-protein]: step 2/2. Catalyzes the radical-mediated insertion of two sulfur atoms into the C-6 and C-8 positions of the octanoyl moiety bound to the lipoyl domains of lipoate-dependent enzymes, thereby converting the octanoylated domains into lipoylated derivatives. This chain is Lipoyl synthase, found in Mycolicibacterium smegmatis (strain ATCC 700084 / mc(2)155) (Mycobacterium smegmatis).